Reading from the N-terminus, the 297-residue chain is ATP synthase subunit gamma, mitochondrial (297 aa).

It belongs to the ATPase gamma chain family. F-type ATPases have 2 components, CF(1) - the catalytic core - and CF(0) - the membrane proton channel. CF(1) has five subunits: alpha(3), beta(3), gamma(1), delta(1), epsilon(1). CF(0) has three main subunits: a, b and c.

It localises to the mitochondrion. It is found in the mitochondrion inner membrane. Its function is as follows. Mitochondrial membrane ATP synthase (F(1)F(0) ATP synthase or Complex V) produces ATP from ADP in the presence of a proton gradient across the membrane which is generated by electron transport complexes of the respiratory chain. F-type ATPases consist of two structural domains, F(1) - containing the extramembraneous catalytic core, and F(0) - containing the membrane proton channel, linked together by a central stalk and a peripheral stalk. During catalysis, ATP synthesis in the catalytic domain of F(1) is coupled via a rotary mechanism of the central stalk subunits to proton translocation. Part of the complex F(1) domain and the central stalk which is part of the complex rotary element. The gamma subunit protrudes into the catalytic domain formed of alpha(3)beta(3). Rotation of the central stalk against the surrounding alpha(3)beta(3) subunits leads to hydrolysis of ATP in three separate catalytic sites on the beta subunits. This chain is ATP synthase subunit gamma, mitochondrial, found in Drosophila melanogaster (Fruit fly).